Consider the following 534-residue polypeptide: High-affinity nicotinic acid transporter (534 aa).

The Extracellular portion of the chain corresponds to methionine 1 to asparagine 130. A disordered region spans residues serine 21–glutamate 56. Residue serine 27 is modified to Phosphoserine. A helical transmembrane segment spans residues threonine 131–leucine 151. Lysine 152 is a topological domain (cytoplasmic). A helical transmembrane segment spans residues isoleucine 153–glycine 173. The Extracellular portion of the chain corresponds to threonine 174–arginine 187. Residues leucine 188–cysteine 208 form a helical membrane-spanning segment. The Cytoplasmic segment spans residues tyrosine 209–arginine 217. Residues phenylalanine 218–glycine 238 traverse the membrane as a helical segment. Over cysteine 239–glutamine 250 the chain is Extracellular. Residues tyrosine 251 to leucine 271 form a helical membrane-spanning segment. The Cytoplasmic portion of the chain corresponds to serine 272–alanine 323. Lysine 283 is covalently cross-linked (Glycyl lysine isopeptide (Lys-Gly) (interchain with G-Cter in ubiquitin)). The helical transmembrane segment at valine 324–isoleucine 344 threads the bilayer. The Extracellular portion of the chain corresponds to threonine 345–glutamine 355. The chain crosses the membrane as a helical span at residues leucine 356–serine 376. Over aspartate 377–proline 384 the chain is Cytoplasmic. The chain crosses the membrane as a helical span at residues phenylalanine 385–valine 405. At histidine 406–tyrosine 410 the chain is on the extracellular side. Residues phenylalanine 411–leucine 431 form a helical membrane-spanning segment. At serine 432–alanine 444 the chain is on the cytoplasmic side. The chain crosses the membrane as a helical span at residues leucine 445 to alanine 465. At lysine 466–glycine 474 the chain is on the extracellular side. A helical membrane pass occupies residues leucine 475–leucine 495. Residues tyrosine 496–tyrosine 534 lie on the Cytoplasmic side of the membrane.

Belongs to the major facilitator superfamily. Allantoate permease family.

Its subcellular location is the membrane. Involved in the uptake of nicotinic acid. This is High-affinity nicotinic acid transporter (TNA1) from Saccharomyces cerevisiae (strain ATCC 204508 / S288c) (Baker's yeast).